A 295-amino-acid chain; its full sequence is Aspartate carbamoyltransferase catalytic subunit (295 aa).

Carbamoyl phosphate is bound by residues Arg49 and Thr50. Lys77 is an L-aspartate binding site. Carbamoyl phosphate is bound by residues Arg99, His127, and Gln130. Positions 161 and 212 each coordinate L-aspartate. 2 residues coordinate carbamoyl phosphate: Gly251 and Pro252.

Belongs to the aspartate/ornithine carbamoyltransferase superfamily. ATCase family. Heterododecamer (2C3:3R2) of six catalytic PyrB chains organized as two trimers (C3), and six regulatory PyrI chains organized as three dimers (R2).

It carries out the reaction carbamoyl phosphate + L-aspartate = N-carbamoyl-L-aspartate + phosphate + H(+). It participates in pyrimidine metabolism; UMP biosynthesis via de novo pathway; (S)-dihydroorotate from bicarbonate: step 2/3. Its function is as follows. Catalyzes the condensation of carbamoyl phosphate and aspartate to form carbamoyl aspartate and inorganic phosphate, the committed step in the de novo pyrimidine nucleotide biosynthesis pathway. The sequence is that of Aspartate carbamoyltransferase catalytic subunit from Aliarcobacter butzleri (strain RM4018) (Arcobacter butzleri).